A 1221-amino-acid polypeptide reads, in one-letter code: MASRTKTGLMETPRSKPSPPTPRVSKPTVTKSDGNSPSPVQSTRLSIDRSPQTVNSKPVSDRRTARVPTPPEANYFLIIICMAFQKSQSRLGKGTGLLVQQTQEDLRKANEQIERLKKDKAKALDDLKESEKLTKEANEKLREALAAQHHAEKSSEIEKFRAVELEQAGIEAVHKKEVSWKKEVESIRSQHALDISALLSTTEELHRIKQELAMTADAKNKALSHAEEATKIAENQAEKAEILSSELSRLKALVGSDEQKKSNEDDEVVSKLKSEIEMLRGKLEKVSILENTLKDQEESIELLHVDLQAAKMVESYANNLAAEWKNEVDKQVEESKELKTSASESLDLAMKQLEENNHALHEAELGNATLKEKVESLVTTIGRQENDLEESQHQVCISKEETSKLEKLVESIKSDLETTQGEKVRALLNEKTATSQIQNLLSEKTELATELENCKKEEEKIKKAMESLTLDLQEVSVEAKEAKEKLLTCQAELELCGVQIESLKLAEKDTNEKHGKMLEDARNEIDGLKSSLENTENEFFNSKTEWEQRELHLMLCVKKLEDGNFSVQEELSKVKNLLHLKEVEACAAKEEDAKMQTNRKELEEEIKDLQEIVEVAKADSMKLKESLVEKEDELKNTAAENRKLREMEVSSIDKIDQLSKVKESLVDKETKLQNIIQEAEELRVKEIDYLKKIEELSAAKESLVEKETKLLSTVQEAEELRRRELACLKKIEELSAVNERLVDKETKLQSSIQEVEVLKEREAENIKQIEELSLSNERLVEKEAKLQTVVQENEELREKESAYQKKIEELSKVDEIFADREAKLQSSTQENEELREREVAYLKKIEELAKLQENLLDKENELHDMVLEIEDLKAKDSLAEKKIEELSNLNKSLLVKESELQDVVFENEKLKSKEALSLKTTEELSDVKQTLADKEKELKTAVVENEKLKAQAASSFQKIEELKNLKQSLLDKENELEGVFQANEELKAKEASSLKKIDELLHLEQSWIDKGNENQELKVREASAAKRIEELSKMKESLLDKELQTVIHDNYELKAREASALKKIEELSKLLEEASSTHEKGEEITNTNPFDNSTGEQKVQESPLEAIDRHLKDDTTIHWSAHNVQVIGKGEKGKDKDTVESEVYHLEKREASSERDTEHDFAEEEVDSKAEGSENFDQLSNGLSLAEQTEDVVSKDQQQKKKKPLLRKFGNLLKKKSSSQK.

The disordered stretch occupies residues M1–P68. The transit peptide at M1–M82 directs the protein to the chloroplast. A compositionally biased stretch (polar residues) spans S32–P58. 3 coiled-coil regions span residues T95 to H149, T202 to K543, and A587 to I1084. Positions E1073–E1083 are enriched in basic and acidic residues. A disordered region spans residues E1073–K1221. The segment covering I1084–Q1097 has biased composition (polar residues). Composition is skewed to basic and acidic residues over residues A1106–T1116 and K1129–D1160. The span at N1175–E1187 shows a compositional bias: polar residues.

It belongs to the WEB family.

It is found in the plastid. The protein resides in the chloroplast. In Arabidopsis thaliana (Mouse-ear cress), this protein is WEB family protein At4g27595, chloroplastic.